The sequence spans 168 residues: MMLDFKKKKELVTQINLIAKTALSIVVANPQGIKSNDITQLRKLARKSNVKLGVYRNTLLNLGIKNTPFECLKNILIGPTLIAYSSEHPGSAAKLLKNFSMSQSSNPNFKILGAVFEGKAISGSNINSLADIPTFNEALRRFIIIAKEISAGKLLRILVSIKNIKENS.

The protein belongs to the universal ribosomal protein uL10 family. Part of the ribosomal stalk of the 50S ribosomal subunit. The N-terminus interacts with L11 and the large rRNA to form the base of the stalk. The C-terminus forms an elongated spine to which L12 dimers bind in a sequential fashion forming a multimeric L10(L12)X complex.

Forms part of the ribosomal stalk, playing a central role in the interaction of the ribosome with GTP-bound translation factors. The chain is Large ribosomal subunit protein uL10 (rplJ) from Buchnera aphidicola subsp. Baizongia pistaciae (strain Bp).